The chain runs to 89 residues: Small ribosomal subunit protein uS17 (89 aa).

It belongs to the universal ribosomal protein uS17 family. In terms of assembly, part of the 30S ribosomal subunit.

Functionally, one of the primary rRNA binding proteins, it binds specifically to the 5'-end of 16S ribosomal RNA. In Albidiferax ferrireducens (strain ATCC BAA-621 / DSM 15236 / T118) (Rhodoferax ferrireducens), this protein is Small ribosomal subunit protein uS17.